The sequence spans 520 residues: 2-isopropylmalate synthase (520 aa).

In terms of domain architecture, Pyruvate carboxyltransferase spans 5–267 (VIIFDTTLRD…YTNINHQEIY (263 aa)). Mn(2+)-binding residues include Asp-14, His-202, His-204, and Asn-238. The tract at residues 392–520 (HLDNFNIQSG…RIQQNTKEMV (129 aa)) is regulatory domain.

It belongs to the alpha-IPM synthase/homocitrate synthase family. LeuA type 1 subfamily. Homodimer. Mn(2+) serves as cofactor.

It is found in the cytoplasm. The enzyme catalyses 3-methyl-2-oxobutanoate + acetyl-CoA + H2O = (2S)-2-isopropylmalate + CoA + H(+). It functions in the pathway amino-acid biosynthesis; L-leucine biosynthesis; L-leucine from 3-methyl-2-oxobutanoate: step 1/4. Its function is as follows. Catalyzes the condensation of the acetyl group of acetyl-CoA with 3-methyl-2-oxobutanoate (2-ketoisovalerate) to form 3-carboxy-3-hydroxy-4-methylpentanoate (2-isopropylmalate). In Photorhabdus laumondii subsp. laumondii (strain DSM 15139 / CIP 105565 / TT01) (Photorhabdus luminescens subsp. laumondii), this protein is 2-isopropylmalate synthase.